Reading from the N-terminus, the 284-residue chain is L-ribulose-5-phosphate 3-epimerase UlaE (284 aa).

Belongs to the L-ribulose-5-phosphate 3-epimerase family.

The catalysed reaction is L-ribulose 5-phosphate = L-xylulose 5-phosphate. Its pathway is cofactor degradation; L-ascorbate degradation; D-xylulose 5-phosphate from L-ascorbate: step 3/4. In terms of biological role, catalyzes the isomerization of L-xylulose-5-phosphate to L-ribulose-5-phosphate. Is involved in the anaerobic L-ascorbate utilization. This Escherichia coli (strain ATCC 8739 / DSM 1576 / NBRC 3972 / NCIMB 8545 / WDCM 00012 / Crooks) protein is L-ribulose-5-phosphate 3-epimerase UlaE.